Reading from the N-terminus, the 285-residue chain is Ubiquinone biosynthesis protein COQ4, mitochondrial (285 aa).

A mitochondrion-targeting transit peptide spans 1–11; sequence MPPAVRQGMRT. His166, Asp167, His170, and Glu182 together coordinate Zn(2+).

Belongs to the COQ4 family. In terms of assembly, component of a multi-subunit COQ enzyme complex, composed of at least COQ3, COQ4, COQ5, COQ6, COQ7 and COQ9. Requires Zn(2+) as cofactor.

The protein localises to the mitochondrion inner membrane. The catalysed reaction is a 4-hydroxy-3-methoxy-5-(all-trans-polyprenyl)benzoate + H(+) = a 2-methoxy-6-(all-trans-polyprenyl)phenol + CO2. Its pathway is cofactor biosynthesis; ubiquinone biosynthesis. In terms of biological role, lyase that catalyzes the C1-decarboxylation of 4-hydroxy-3-methoxy-5-(all-trans-polyprenyl)benzoic acid into 2-methoxy-6-(all-trans-polyprenyl)phenol during ubiquinone biosynthesis. In Paracoccidioides lutzii (strain ATCC MYA-826 / Pb01) (Paracoccidioides brasiliensis), this protein is Ubiquinone biosynthesis protein COQ4, mitochondrial.